We begin with the raw amino-acid sequence, 155 residues long: MYKIQLLSCIALTLALVANGAPTSSSTGNTMKEVKSLLLDLQLLLEKVKNPENLKLSRMHTFDFYVPKVNATELKHLKCLLEELKLLEEVLNLAPSKNLNPREIKDSMDNIKRIVLELQGSETRFTCEYDDATVNAVEFLNKWITFCQSIYSTMT.

Residues 1 to 20 (MYKIQLLSCIALTLALVANG) form the signal peptide. O-linked (GalNAc...) threonine glycosylation is present at Thr-23. Cys-79 and Cys-127 are disulfide-bonded.

It belongs to the IL-2 family.

It is found in the secreted. Functionally, cytokine produced by activated CD4-positive helper T-cells and to a lesser extend activated CD8-positive T-cells and natural killer (NK) cells that plays pivotal roles in the immune response and tolerance. Binds to a receptor complex composed of either the high-affinity trimeric IL-2R (IL2RA/CD25, IL2RB/CD122 and IL2RG/CD132) or the low-affinity dimeric IL-2R (IL2RB and IL2RG). Interaction with the receptor leads to oligomerization and conformation changes in the IL-2R subunits resulting in downstream signaling starting with phosphorylation of JAK1 and JAK3. In turn, JAK1 and JAK3 phosphorylate the receptor to form a docking site leading to the phosphorylation of several substrates including STAT5. This process leads to activation of several pathways including STAT, phosphoinositide-3-kinase/PI3K and mitogen-activated protein kinase/MAPK pathways. Functions as a T-cell growth factor and can increase NK-cell cytolytic activity as well. Promotes strong proliferation of activated B-cells and subsequently immunoglobulin production. Plays a pivotal role in regulating the adaptive immune system by controlling the survival and proliferation of regulatory T-cells, which are required for the maintenance of immune tolerance. Moreover, participates in the differentiation and homeostasis of effector T-cell subsets, including Th1, Th2, Th17 as well as memory CD8-positive T-cells. This is Interleukin-2 (IL2) from Bos taurus (Bovine).